The following is a 432-amino-acid chain: Adenylosuccinate synthetase (432 aa).

Residues 12–18 (GDEGKGK) and 40–42 (GHT) contribute to the GTP site. The active-site Proton acceptor is the aspartate 13. Residues aspartate 13 and glycine 40 each contribute to the Mg(2+) site. Residues 13 to 16 (DEGK), 38 to 41 (NAGH), threonine 132, arginine 146, glutamine 226, threonine 241, and arginine 305 each bind IMP. Histidine 41 acts as the Proton donor in catalysis. 301-307 (TVTGRKR) contacts substrate. GTP is bound by residues arginine 307, 333–335 (KLD), and 415–417 (STS).

This sequence belongs to the adenylosuccinate synthetase family. Homodimer. Mg(2+) serves as cofactor.

Its subcellular location is the cytoplasm. The enzyme catalyses IMP + L-aspartate + GTP = N(6)-(1,2-dicarboxyethyl)-AMP + GDP + phosphate + 2 H(+). Its pathway is purine metabolism; AMP biosynthesis via de novo pathway; AMP from IMP: step 1/2. Functionally, plays an important role in the de novo pathway of purine nucleotide biosynthesis. Catalyzes the first committed step in the biosynthesis of AMP from IMP. The chain is Adenylosuccinate synthetase from Sinorhizobium fredii (strain NBRC 101917 / NGR234).